Consider the following 721-residue polypeptide: Ribonucleoside-diphosphate reductase subunit alpha (721 aa).

Residues threonine 159, 175-176 (SC), glycine 204, 384-388 (NLCSE), and 589-593 (PTGSI) each bind substrate. Cysteine 176 and cysteine 413 form a disulfide bridge. The active-site Proton acceptor is asparagine 384. Catalysis depends on cysteine 386, which acts as the Cysteine radical intermediate. Glutamate 388 (proton acceptor) is an active-site residue.

The protein belongs to the ribonucleoside diphosphate reductase large chain family. As to quaternary structure, tetramer of two alpha and two beta subunits.

The enzyme catalyses a 2'-deoxyribonucleoside 5'-diphosphate + [thioredoxin]-disulfide + H2O = a ribonucleoside 5'-diphosphate + [thioredoxin]-dithiol. With respect to regulation, under complex allosteric control mediated by deoxynucleoside triphosphates and ATP binding. The type of nucleotide bound at the specificity site determines substrate preference. It seems probable that ATP makes the enzyme reduce CDP and UDP, dGTP favors ADP reduction and dTTP favors GDP reduction. Functionally, provides the precursors necessary for DNA synthesis. Catalyzes the biosynthesis of deoxyribonucleotides from the corresponding ribonucleotides. The chain is Ribonucleoside-diphosphate reductase subunit alpha (nrdE) from Mycoplasma pneumoniae (strain ATCC 29342 / M129 / Subtype 1) (Mycoplasmoides pneumoniae).